The chain runs to 486 residues: Shugoshin-1 (486 aa).

Residues 71–154 are a coiled coil; sequence IEVSRVELQK…QNRAKILEKK (84 aa). Disordered stretches follow at residues 137–163, 187–209, 222–251, 323–346, 382–403, and 418–467; these read MSKT…CAPT, YTSC…RKSE, HSCR…ARLN, AGSS…PRKS, PIQH…DPGP, and TVAP…SRRA. Residues 331 to 346 are compositionally biased toward basic and acidic residues; it reads EAHKFDIEDPEPPRKS. Basic residues predominate over residues 387 to 396; that stretch reads QKRKLSRRKS. The segment covering 423 to 433 has biased composition (polar residues); it reads APSSSNALIEQ.

This sequence belongs to the shugoshin family. As to expression, highly expressed in roots. Expressed in panicles. Expressed at low levels in leaves.

It localises to the nucleus. It is found in the nucleolus. The protein resides in the chromosome. Its subcellular location is the centromere. Its function is as follows. Plays a central role in chromosome cohesion during meiosis I by preventing premature dissociation of cohesin complex from centromeres after prophase, when most of cohesin complex dissociates from chromosomes arms. Required for the timely assembly and maintenance of synaptonemal complex (SC) during early prophase I. Required for maintenance of centromeric cohesion before prophase II and correct segregation of chromatids during meiosis II. Has apparently no function in mitosis. This Oryza sativa subsp. japonica (Rice) protein is Shugoshin-1.